Consider the following 60-residue polypeptide: Cecropin-B1 (60 aa).

The first 24 residues, 1 to 24 (MNFSKVFALVLLIGLVLLTGHTEA), serve as a signal peptide directing secretion.

Belongs to the cecropin family.

The protein localises to the secreted. Its function is as follows. Putative antimicrobial peptide. Partially neutralizes lipopolysaccharides (LPS). Exhibits anti-inflammatory properties: inhibits LPS-induced iNOS/NOS2 transcription, nitric oxide (NO) and pro-inflammatory cytokine production in mouse macrophages and human peripheral blood mononuclear cells (PBMCs); inhibits LPS-induced activation of MAPK and NF-kappa-B signaling pathways in mouse macrophages. The sequence is that of Cecropin-B1 from Aedes aegypti (Yellowfever mosquito).